Reading from the N-terminus, the 67-residue chain is Large ribosomal subunit protein bL31 (67 aa).

Residues Cys16, Cys18, Cys36, and Cys39 each contribute to the Zn(2+) site.

This sequence belongs to the bacterial ribosomal protein bL31 family. Type A subfamily. Part of the 50S ribosomal subunit. It depends on Zn(2+) as a cofactor.

Functionally, binds the 23S rRNA. The polypeptide is Large ribosomal subunit protein bL31 (Treponema pallidum (strain Nichols)).